The chain runs to 541 residues: Chaperonin GroEL 2 (541 aa).

Residues 29–32, 86–90, Gly413, 478–480, and Asp494 each bind ATP; these read TLGP, DGTTT, and NAA.

Belongs to the chaperonin (HSP60) family. In terms of assembly, forms a cylinder of 14 subunits composed of two heptameric rings stacked back-to-back. Interacts with the co-chaperonin GroES.

It is found in the cytoplasm. The catalysed reaction is ATP + H2O + a folded polypeptide = ADP + phosphate + an unfolded polypeptide.. Functionally, together with its co-chaperonin GroES, plays an essential role in assisting protein folding. The GroEL-GroES system forms a nano-cage that allows encapsulation of the non-native substrate proteins and provides a physical environment optimized to promote and accelerate protein folding. The chain is Chaperonin GroEL 2 from Corynebacterium jeikeium (strain K411).